A 79-amino-acid polypeptide reads, in one-letter code: Small ribosomal subunit protein uS11 (79 aa).

Serine 14 carries the phosphoserine modification. Glycyl lysine isopeptide (Lys-Gly) (interchain with G-Cter in SUMO2) cross-links involve residues lysine 59 and lysine 61.

This sequence belongs to the universal ribosomal protein uS11 family. In terms of assembly, component of the small ribosomal subunit. Part of the small subunit (SSU) processome, composed of more than 70 proteins and the RNA chaperone small nucleolar RNA (snoRNA) U3.

Its subcellular location is the cytoplasm. The protein localises to the nucleus. It localises to the nucleolus. Component of the small ribosomal subunit. The ribosome is a large ribonucleoprotein complex responsible for the synthesis of proteins in the cell. Part of the small subunit (SSU) processome, first precursor of the small eukaryotic ribosomal subunit. During the assembly of the SSU processome in the nucleolus, many ribosome biogenesis factors, an RNA chaperone and ribosomal proteins associate with the nascent pre-rRNA and work in concert to generate RNA folding, modifications, rearrangements and cleavage as well as targeted degradation of pre-ribosomal RNA by the RNA exosome. This Sus scrofa (Pig) protein is Small ribosomal subunit protein uS11 (RPS14).